A 391-amino-acid chain; its full sequence is Paired box protein Pax-5 (391 aa).

Positions methionine 1–asparagine 21 are disordered. Positions glycine 16–lysine 142 form a DNA-binding region, paired. The tract at residues glycine 19–threonine 75 is PAI subdomain. Positions lysine 94–lysine 142 are RED subdomain. A disordered region spans residues serine 182–aspartate 218.

As to quaternary structure, interacts with ETS1; this interaction alters PAX5 DNA-binding properties. Binds DNA as a monomer. Interacts with TBP; this interaction allows PAX5 to interact with the basal transcription machinery. Interacts with RB1. Interacts with TLE4. Interacts with DAXX. In terms of assembly, (Microbial infection) Interacts (via N-terminus) with Epstein-Barr virus protein BZLF1 (via C-terminus); this interaction inhibits BZLF1-mediated lytic viral reactivation. Interacts also with EBNA1; this interaction promotes EBNA1-dependent transcription. Post-translationally, O-glycosylated. Phosphorylated by SYK. This phosphorylation plays an important role in the abolition of BLIMP1 repression by PAX5 in order to trigger plasma cell differentiation.

Its subcellular location is the nucleus. Functionally, transcription factor that plays an essential role in commitment of lymphoid progenitors to the B-lymphocyte lineage. Fulfills a dual role by repressing B-lineage inappropriate genes and simultaneously activating B-lineage-specific genes. In turn, regulates cell adhesion and migration, induces V(H)-to-D(H)J(H) recombination, facilitates pre-B-cell receptor signaling and promotes development to the mature B-cell stage. Repression of the cohesin-release factor WAPL causes global changes of the chromosomal architecture in pro-B cells to facilitate the generation of a diverse antibody repertoire. (Microbial infection) Plays an essential role in the maintenance of Epstein-Barr virus genome copy number within the host cell by promoting EBNA1/oriP-dependent binding and transcription. Also participates in the inhibition of lytic EBV reactivation by modulating viral BZLF1 activity. The protein is Paired box protein Pax-5 (PAX5) of Homo sapiens (Human).